The primary structure comprises 951 residues: MEKTYNPQDIEQPLYEHWEKQGYFKPNGDESKESFCIMIPPPNVTGSLHMGHAFQQTIMDTMIRYQRMQGKNTLWQVGTDHAGIATQMVVERKIAAEEGKTRHDYGRDAFIDKIWQWKAESGGTITRQMRRLGNSVDWERERFTMDEGLSNAVKEVFVRLYKEDLIYRGKRLVNWDPKLRTAISDLEVENRESKGSMWHIRYPLADGAKTADGKDYLVVATTRPETILGDTGVAVNPEDPRYQSLIGKFVILPLVNRRIPIVGDEHADMEKGTGCVKITPAHDFNDYEVGKRHALPMINILTFDGDIRESAEVFDTKGEESDVYSSEIPAEFQKLERFAARKAIVAAVDALGLLEEIKPHDLTVPYGDRGGVVIEPMLTDQWYVRADVLAKPAVEAVENGDIQFVPKQYENMYFSWMRDIQDWCISRQLWWGHRIPAWYDNDGNVYVGRTEDEVRQENNLGADVALRQDEDVLDTWFSSALWTFSTLGWPENTDALRQFHPTSVMVSGFDIIFFWIARMIMMTMHFIKDENGKPQVPFHTVYMTGLIRDDEGQKMSKSKGNVIDPLDMVDGISLPELLEKRTGNMMQPQMAEKIRKRTEKQFPNGIEPHGTDALRFTLAALASTGRDINWDMKRLEGYRNFCNKLWNASRFVLMNTEEQDCGFNGGEMTLSLADRWILAEFNQTVKAYREALDNFRFDIAAGILYEFTWNQFCDWYLELTKPVMTGGSESELRGTRHTLVTVLEGLLRLAHPIIPFITETIWQRVKVICGITADTIMLQPFPEYNAAQVDEAALADTEWLKQAIVAVRNIRAEMNIAPGKPLELLLRGCSEEAVRRVNDNRSFLQTLARLESITVLPADDKGPVSVTKIIDGAELLIPMAGLINKDDELARLAKEVAKIEGEIARIEGKLSNEGFVARAPEAVIAKEREKLDSYAEAKAKLIEQQAVISAL.

The 'HIGH' region signature appears at proline 42–histidine 52. The short motif at lysine 554 to serine 558 is the 'KMSKS' region element. An ATP-binding site is contributed by lysine 557. A coiled-coil region spans residues leucine 882–glutamine 944.

Belongs to the class-I aminoacyl-tRNA synthetase family. ValS type 1 subfamily. Monomer.

The protein resides in the cytoplasm. It carries out the reaction tRNA(Val) + L-valine + ATP = L-valyl-tRNA(Val) + AMP + diphosphate. Catalyzes the attachment of valine to tRNA(Val). As ValRS can inadvertently accommodate and process structurally similar amino acids such as threonine, to avoid such errors, it has a 'posttransfer' editing activity that hydrolyzes mischarged Thr-tRNA(Val) in a tRNA-dependent manner. This is Valine--tRNA ligase from Salmonella choleraesuis (strain SC-B67).